Reading from the N-terminus, the 361-residue chain is Rho-GTPase-activating protein 5 (361 aa).

The region spanning 52 to 245 (IFLTRRDGEK…FLINHQGSFI (194 aa)) is the Rho-GAP domain. Positions 306-323 (SSATYSNSPSSNFSNMKS) are enriched in low complexity. Residues 306–345 (SSATYSNSPSSNFSNMKSSEVDPGSPPRIKSRSYSLSRSS) form a disordered region.

The protein resides in the membrane. In terms of biological role, GTPase-activating protein for Rho1. Has a role in the negative regulation of (1-3)beta-D-glucan synthase activity and cell integrity. In Schizosaccharomyces pombe (strain 972 / ATCC 24843) (Fission yeast), this protein is Rho-GTPase-activating protein 5 (rga5).